The following is a 201-amino-acid chain: Small ribosomal subunit protein uS10m (201 aa).

This sequence belongs to the universal ribosomal protein uS10 family. In terms of assembly, component of the mitochondrial small ribosomal subunit (mt-SSU). Mature mammalian 55S mitochondrial ribosomes consist of a small (28S) and a large (39S) subunit. The 28S small subunit contains a 12S ribosomal RNA (12S mt-rRNA) and 30 different proteins. The 39S large subunit contains a 16S rRNA (16S mt-rRNA), a copy of mitochondrial valine transfer RNA (mt-tRNA(Val)), which plays an integral structural role, and 52 different proteins.

It localises to the mitochondrion. The chain is Small ribosomal subunit protein uS10m (MRPS10) from Homo sapiens (Human).